The sequence spans 936 residues: Aconitate hydratase A (936 aa).

The segment at 401–449 (VTPDFDAEGPATENTSAQTAGTPASAADAKGNIPSAAAGAEGRPSNPVT) is disordered. A compositionally biased stretch (polar residues) spans 412-422 (TENTSAQTAGT). [4Fe-4S] cluster is bound by residues C472, C538, and C541.

This sequence belongs to the aconitase/IPM isomerase family. In terms of assembly, monomer. [4Fe-4S] cluster is required as a cofactor.

It catalyses the reaction citrate = D-threo-isocitrate. The catalysed reaction is (2S,3R)-3-hydroxybutane-1,2,3-tricarboxylate = 2-methyl-cis-aconitate + H2O. It functions in the pathway carbohydrate metabolism; tricarboxylic acid cycle; isocitrate from oxaloacetate: step 2/2. It participates in organic acid metabolism; propanoate degradation. Its function is as follows. Involved in the catabolism of short chain fatty acids (SCFA) via the tricarboxylic acid (TCA)(acetyl degradation route) and probably via the 2-methylcitrate cycle I (propionate degradation route). Catalyzes the reversible isomerization of citrate to isocitrate via cis-aconitate. Could catalyze the hydration of 2-methyl-cis-aconitate to yield (2R,3S)-2-methylisocitrate. The apo form of AcnA functions as a RNA-binding regulatory protein. This is Aconitate hydratase A (acn) from Corynebacterium jeikeium (strain K411).